A 231-amino-acid polypeptide reads, in one-letter code: Female protein (231 aa).

A signal peptide spans 1–19 (MDKMLLLLGVSILLSEVFA). The Pentraxin (PTX) domain occupies 24–223 (TGKVFVFPRE…YAVIRPRCVA (200 aa)). A glycan (N-linked (GlcNAc...) asparagine) is linked at Asn-51. Cysteines 55 and 114 form a disulfide. Residues Asp-77, Asn-78, Glu-155, Gln-156, Asp-157, and Gln-167 each coordinate Ca(2+).

Belongs to the pentraxin family. Homopentamer. Pentraxin (or pentaxin) have a discoid arrangement of 5 non-covalently bound subunits. It depends on Ca(2+) as a cofactor.

The protein localises to the secreted. The polypeptide is Female protein (Nothocricetulus migratorius (Gray dwarf hamster)).